The following is a 227-amino-acid chain: MLVCIPEVLSKDEVAEFRRIMDAAEWEDGRATAGAQSALVKRNEQLPPDGEVARQLGARVVRALLANPHFVSAAIPLQIFPPLFNRYGEGHHFGMHVDNAVRGDPLTGLRIRTDLSVTLFLAEPDEYDGGELVAEDYYGTQEVKLPAGDLVLYPSSSLHRVTPVTRGTRVASFFWLQSMVRSPQARSLIYDLDGAIQGLAAELGQDHAEVVRLAGIYHNLIRTWAEV.

In terms of domain architecture, Fe2OG dioxygenase spans 78 to 178 (QIFPPLFNRY…RVASFFWLQS (101 aa)). 3 residues coordinate Fe cation: His-96, Asp-98, and His-159. Arg-169 serves as a coordination point for 2-oxoglutarate.

It depends on Fe(2+) as a cofactor. Requires L-ascorbate as cofactor.

This Methylobacterium sp. (strain 4-46) protein is PKHD-type hydroxylase M446_1130.